Consider the following 121-residue polypeptide: Phosphoribosyl-ATP pyrophosphatase (121 aa).

It belongs to the PRA-PH family.

It localises to the cytoplasm. The catalysed reaction is 1-(5-phospho-beta-D-ribosyl)-ATP + H2O = 1-(5-phospho-beta-D-ribosyl)-5'-AMP + diphosphate + H(+). It participates in amino-acid biosynthesis; L-histidine biosynthesis; L-histidine from 5-phospho-alpha-D-ribose 1-diphosphate: step 2/9. The protein is Phosphoribosyl-ATP pyrophosphatase of Burkholderia multivorans (strain ATCC 17616 / 249).